Consider the following 104-residue polypeptide: Precursor of CEP11 (104 aa).

The N-terminal stretch at 1 to 27 (MAKTRRVIYLFLTIVLLFCELIDEAQG) is a signal peptide. Positions 28–85 (SRFRCHHSEDYSCKKRSSHHHHHHHHHQQQQHHHKDTPPEELQGSIKTRRSKDIYGLN) are excised as a propeptide. A disordered region spans residues 37–104 (DYSCKKRSSH…SPGVGHLIKT (68 aa)). The segment covering 41-62 (KKRSSHHHHHHHHHQQQQHHHK) has biased composition (basic residues). 2 positions are modified to hydroxyproline: P92 and P96. A propeptide spanning residues 101-104 (LIKT) is cleaved from the precursor.

It belongs to the C-terminally encoded plant signaling peptide (CEP) family. As to quaternary structure, interacts with CEP receptors (e.g. CEPR1 and CEPR2). Post-translationally, the mature small signaling peptide is generated by proteolytic processing of the longer precursor. As to expression, expressed in lateral root primordia and in lateral roots excluding the meristem region.

Its subcellular location is the secreted. The protein resides in the extracellular space. It localises to the apoplast. Extracellular signaling peptide that may regulate primary root growth rate and systemic nitrogen (N)-demand signaling. Mediates up-regulation of genes involved in N uptake and assimilation pathways. The polypeptide is Precursor of CEP11 (Arabidopsis thaliana (Mouse-ear cress)).